A 392-amino-acid chain; its full sequence is Putative cystathionine gamma-lyase (392 aa).

Residues 1 to 10 (MSDSATTDSA) show a composition bias toward polar residues. Residues 1–41 (MSDSATTDSAGTGGERSASAPGDGTRAVRAGLPEPVKHEPT) form a disordered region. Residue Lys-216 is modified to N6-(pyridoxal phosphate)lysine.

Belongs to the trans-sulfuration enzymes family. Pyridoxal 5'-phosphate is required as a cofactor.

The protein resides in the cytoplasm. It carries out the reaction L,L-cystathionine + H2O = 2-oxobutanoate + L-cysteine + NH4(+). The protein operates within amino-acid biosynthesis; L-cysteine biosynthesis; L-cysteine from L-homocysteine and L-serine: step 2/2. The protein is Putative cystathionine gamma-lyase (cysA) of Streptomyces coelicolor (strain ATCC BAA-471 / A3(2) / M145).